A 375-amino-acid polypeptide reads, in one-letter code: 23S rRNA (uracil(747)-C(5))-methyltransferase RlmC (375 aa).

Cys-3, Cys-11, Cys-14, and Cys-87 together coordinate [4Fe-4S] cluster. S-adenosyl-L-methionine is bound by residues Gln-212, Phe-241, Glu-262, and Asn-307. The Nucleophile role is filled by Cys-334.

It belongs to the class I-like SAM-binding methyltransferase superfamily. RNA M5U methyltransferase family. RlmC subfamily.

The enzyme catalyses uridine(747) in 23S rRNA + S-adenosyl-L-methionine = 5-methyluridine(747) in 23S rRNA + S-adenosyl-L-homocysteine + H(+). Functionally, catalyzes the formation of 5-methyl-uridine at position 747 (m5U747) in 23S rRNA. In Escherichia coli O45:K1 (strain S88 / ExPEC), this protein is 23S rRNA (uracil(747)-C(5))-methyltransferase RlmC.